Reading from the N-terminus, the 142-residue chain is Large ribosomal subunit protein uL11 (142 aa).

The protein belongs to the universal ribosomal protein uL11 family. As to quaternary structure, part of the ribosomal stalk of the 50S ribosomal subunit. Interacts with L10 and the large rRNA to form the base of the stalk. L10 forms an elongated spine to which L12 dimers bind in a sequential fashion forming a multimeric L10(L12)X complex. Post-translationally, one or more lysine residues are methylated.

Its function is as follows. Forms part of the ribosomal stalk which helps the ribosome interact with GTP-bound translation factors. This chain is Large ribosomal subunit protein uL11, found in Shewanella frigidimarina (strain NCIMB 400).